The chain runs to 119 residues: Large ribosomal subunit protein bL20 (119 aa).

The protein belongs to the bacterial ribosomal protein bL20 family.

Its function is as follows. Binds directly to 23S ribosomal RNA and is necessary for the in vitro assembly process of the 50S ribosomal subunit. It is not involved in the protein synthesizing functions of that subunit. The sequence is that of Large ribosomal subunit protein bL20 from Enterococcus faecalis (strain ATCC 700802 / V583).